The sequence spans 573 residues: uncharacterized protein (573 aa).

The region spanning 15 to 298 is the ABC transmembrane type-1 domain; the sequence is AGIALILMLT…FPFLIMIFTR (284 aa). A run of 6 helical transmembrane segments spans residues 17-37, 52-72, 127-147, 153-173, 238-258, and 275-295; these read IALILMLTELAVELMQPLLIA, VWIWGTVMIGLTVLSFAAGML, IFMSLRFMLRAPLMIAGGIVL, VKLGFFLLVTIPILILFLLWV, FTMPVLMLLMNLCILLILWAG, and IINYATRITGALSMFPFLIMI. The region spanning 330–563 is the ABC transporter domain; the sequence is IEFQHVSFRY…SQLYKRIYES (234 aa). 364–371 serves as a coordination point for ATP; that stretch reads GATGSGKS.

Belongs to the ABC transporter superfamily.

It is found in the cell membrane. This is an uncharacterized protein from Bacillus subtilis (strain 168).